A 266-amino-acid chain; its full sequence is 3',5'-cyclic-nucleotide phosphodiesterase alr5338 (266 aa).

The Fe cation site is built by aspartate 14, histidine 16, aspartate 56, asparagine 86, histidine 155, histidine 194, and histidine 196. Residues histidine 16, aspartate 56, and 86 to 87 each bind AMP; that span reads NH. Residue histidine 196 participates in AMP binding.

Belongs to the cyclic nucleotide phosphodiesterase class-III family. It depends on Fe(2+) as a cofactor. Requires Mn(2+) as cofactor.

The enzyme catalyses a nucleoside 3',5'-cyclic phosphate + H2O = a nucleoside 5'-phosphate + H(+). It carries out the reaction 3',5'-cyclic AMP + H2O = AMP + H(+). It catalyses the reaction 3',5'-cyclic GMP + H2O = GMP + H(+). Its activity is regulated as follows. Activated by iron and manganese. Functionally, hydrolyzes cAMP to 5'-AMP. Plays an important regulatory role in modulating the intracellular concentration of cAMP, thereby influencing cAMP-dependent processes. Can also hydrolyze cGMP. This Nostoc sp. (strain PCC 7120 / SAG 25.82 / UTEX 2576) protein is 3',5'-cyclic-nucleotide phosphodiesterase alr5338.